A 217-amino-acid chain; its full sequence is Probable nicotinate-nucleotide adenylyltransferase (217 aa).

The protein belongs to the NadD family.

The catalysed reaction is nicotinate beta-D-ribonucleotide + ATP + H(+) = deamido-NAD(+) + diphosphate. The protein operates within cofactor biosynthesis; NAD(+) biosynthesis; deamido-NAD(+) from nicotinate D-ribonucleotide: step 1/1. Functionally, catalyzes the reversible adenylation of nicotinate mononucleotide (NaMN) to nicotinic acid adenine dinucleotide (NaAD). This Dechloromonas aromatica (strain RCB) protein is Probable nicotinate-nucleotide adenylyltransferase.